The sequence spans 417 residues: Putative competence-damage inducible protein (417 aa).

The protein belongs to the CinA family.

This Leuconostoc citreum (strain KM20) protein is Putative competence-damage inducible protein.